The primary structure comprises 236 residues: MQSIKYKRVMLKISGEALAGTNGYGIDFEVANRIAKEIKEIVDLGIEVGAVVGGGNIWRGRNGKGMDRTTADYMGMLATCINALALQDSLENMDVDTRVQTAIEMKQVAEPFIRRRAMRHLEKGRVVIFAGGTGNPYFSTDTTAALRAAEIEADVILLAKKVDGVYDKDPHKYDDAIKFDNLTYMEVLEKNLQVMDSTATSLCMDNNIPIIVFGLDVSGNIRKAVLGEKIGTIVSK.

12-15 contributes to the ATP binding site; that stretch reads KISG. The segment at 20-25 is involved in allosteric activation by GTP; it reads GTNGYG. G54 provides a ligand contact to UMP. Positions 55 and 59 each coordinate ATP. UMP-binding positions include D72 and 133–140; that span reads TGNPYFST. The ATP site is built by Y166 and D169.

This sequence belongs to the UMP kinase family. As to quaternary structure, homohexamer.

It localises to the cytoplasm. It carries out the reaction UMP + ATP = UDP + ADP. Its pathway is pyrimidine metabolism; CTP biosynthesis via de novo pathway; UDP from UMP (UMPK route): step 1/1. Allosterically activated by GTP. Inhibited by UTP. Its function is as follows. Catalyzes the reversible phosphorylation of UMP to UDP. The chain is Uridylate kinase from Clostridium acetobutylicum (strain ATCC 824 / DSM 792 / JCM 1419 / IAM 19013 / LMG 5710 / NBRC 13948 / NRRL B-527 / VKM B-1787 / 2291 / W).